Here is a 559-residue protein sequence, read N- to C-terminus: Asparagine--tRNA ligase, cytoplasmic (559 aa).

Residue serine 72 is modified to Phosphoserine. Positions 82-102 are disordered; that stretch reads HREQMKNDSREKKEAEDNLRR. Lysine 255 carries the post-translational modification N6-acetyllysine. Residue serine 493 is modified to Phosphoserine. At lysine 501 the chain carries N6-acetyllysine.

This sequence belongs to the class-II aminoacyl-tRNA synthetase family. In terms of assembly, homodimer.

The protein localises to the cytoplasm. The catalysed reaction is tRNA(Asn) + L-asparagine + ATP = L-asparaginyl-tRNA(Asn) + AMP + diphosphate + H(+). Its function is as follows. Catalyzes the attachment of asparagine to tRNA(Asn) in a two-step reaction: asparagine is first activated by ATP to form Asn-AMP and then transferred to the acceptor end of tRNA(Asn). In addition to its essential role in protein synthesis, acts as a signaling molecule that induced migration of CCR3-expressing cells. Has an essential role in the development of the cerebral cortex, being required for proper proliferation of radial glial cells. This is Asparagine--tRNA ligase, cytoplasmic from Mus musculus (Mouse).